The primary structure comprises 305 residues: Serine/threonine-protein phosphatase ppe1 (305 aa).

Residues Asp51, His53, Asp79, and Asn111 each coordinate Mn(2+). His112 (proton donor) is an active-site residue. Residues His161 and His235 each coordinate Mn(2+).

This sequence belongs to the PPP phosphatase family. PP-6 (PP-V) subfamily. Interacts with sts5, ekc1 and mis12. Requires Mn(2+) as cofactor.

The protein resides in the nucleus. The enzyme catalyses O-phospho-L-seryl-[protein] + H2O = L-seryl-[protein] + phosphate. It catalyses the reaction O-phospho-L-threonyl-[protein] + H2O = L-threonyl-[protein] + phosphate. Has a role in chromosome segregation. May provide a dynamic connection between kinetochore microtubules and kinetochore chromatin. Negatively regulates mis12. This Schizosaccharomyces pombe (strain 972 / ATCC 24843) (Fission yeast) protein is Serine/threonine-protein phosphatase ppe1 (ppe1).